Consider the following 445-residue polypeptide: MKHFEVNFDGLVGPTHNYAGLSYGNVASQNNAKEASNPKEAAKQGLRKMKALTELGMTQGVLAPQERPDLATLRRLGFTGNDASVLAQAAKQAPAVLAACYSASSMWTANAATVSPSADTQDGRIHFTPANLTNKFHRSLEPEVTGRILRAVFNNDRHFYHHQHLPENDHFGDEGAANHTRLCRAYGESGVELFVYGRSAFDVSQPAPKRYPARQTLEASQAIARLHGLGDESAVFIQQNPDVIDQGVFHNDVIAVGNQNVLFFHQQAFLNTASALAEVRTKFGDGELHFIEVPTAEVSVQDAVKSYLFNTQILTLPSGEMAIIAPTECRDNPAVSAYLTKLVTLGTPIKGVHYMDVKQSMRNGGGPACLRLRVAMNDTELAAVNPACLITDSQFARLDGWVDRHYRDSLALDDLRDPALVMESRTALDELTQILKLGSVYPFQR.

Residues 19–28, N110, and 137–138 contribute to the substrate site; these read AGLSYGNVAS and HR. E174 is an active-site residue. R214 is a substrate binding site. Residue H250 is part of the active site. Substrate-binding residues include D252 and N363. C369 (nucleophile) is an active-site residue.

Belongs to the succinylarginine dihydrolase family. Homodimer.

The catalysed reaction is N(2)-succinyl-L-arginine + 2 H2O + 2 H(+) = N(2)-succinyl-L-ornithine + 2 NH4(+) + CO2. The protein operates within amino-acid degradation; L-arginine degradation via AST pathway; L-glutamate and succinate from L-arginine: step 2/5. Its function is as follows. Catalyzes the hydrolysis of N(2)-succinylarginine into N(2)-succinylornithine, ammonia and CO(2). This Aeromonas hydrophila subsp. hydrophila (strain ATCC 7966 / DSM 30187 / BCRC 13018 / CCUG 14551 / JCM 1027 / KCTC 2358 / NCIMB 9240 / NCTC 8049) protein is N-succinylarginine dihydrolase.